Here is a 199-residue protein sequence, read N- to C-terminus: Adenylyl-sulfate kinase (199 aa).

An ATP-binding site is contributed by 34–41 (GLSGSGKS). The Phosphoserine intermediate role is filled by Ser108.

The protein belongs to the APS kinase family.

The enzyme catalyses adenosine 5'-phosphosulfate + ATP = 3'-phosphoadenylyl sulfate + ADP + H(+). Its pathway is sulfur metabolism; hydrogen sulfide biosynthesis; sulfite from sulfate: step 2/3. In terms of biological role, catalyzes the synthesis of activated sulfate. This chain is Adenylyl-sulfate kinase, found in Staphylococcus carnosus (strain TM300).